The sequence spans 372 residues: Heat-inducible transcription repressor HrcA (372 aa).

This sequence belongs to the HrcA family.

Negative regulator of class I heat shock genes (grpE-dnaK-dnaJ and groELS operons). Prevents heat-shock induction of these operons. The protein is Heat-inducible transcription repressor HrcA of Chloroflexus aurantiacus (strain ATCC 29366 / DSM 635 / J-10-fl).